Reading from the N-terminus, the 428-residue chain is Enolase (428 aa).

Glutamine 162 contacts (2R)-2-phosphoglycerate. Glutamate 204 (proton donor) is an active-site residue. Mg(2+) is bound by residues aspartate 241, glutamate 286, and aspartate 313. (2R)-2-phosphoglycerate-binding residues include lysine 338, arginine 367, serine 368, and lysine 389. Residue lysine 338 is the Proton acceptor of the active site.

This sequence belongs to the enolase family. As to quaternary structure, component of the RNA degradosome, a multiprotein complex involved in RNA processing and mRNA degradation. Requires Mg(2+) as cofactor.

Its subcellular location is the cytoplasm. It localises to the secreted. The protein resides in the cell surface. The catalysed reaction is (2R)-2-phosphoglycerate = phosphoenolpyruvate + H2O. It participates in carbohydrate degradation; glycolysis; pyruvate from D-glyceraldehyde 3-phosphate: step 4/5. Catalyzes the reversible conversion of 2-phosphoglycerate (2-PG) into phosphoenolpyruvate (PEP). It is essential for the degradation of carbohydrates via glycolysis. The sequence is that of Enolase from Vesicomyosocius okutanii subsp. Calyptogena okutanii (strain HA).